We begin with the raw amino-acid sequence, 297 residues long: Ribosomal RNA small subunit methyltransferase H (297 aa).

Residues 34–36 (GGH), aspartate 54, phenylalanine 81, aspartate 99, and glutamine 106 contribute to the S-adenosyl-L-methionine site.

The protein belongs to the methyltransferase superfamily. RsmH family.

The protein resides in the cytoplasm. It carries out the reaction cytidine(1402) in 16S rRNA + S-adenosyl-L-methionine = N(4)-methylcytidine(1402) in 16S rRNA + S-adenosyl-L-homocysteine + H(+). Specifically methylates the N4 position of cytidine in position 1402 (C1402) of 16S rRNA. The chain is Ribosomal RNA small subunit methyltransferase H from Chlamydia pneumoniae (Chlamydophila pneumoniae).